We begin with the raw amino-acid sequence, 117 residues long: Acidic phospholipase A2 PA-1G (117 aa).

7 cysteine pairs are disulfide-bonded: Cys-11/Cys-71, Cys-27/Cys-117, Cys-29/Cys-45, Cys-44/Cys-98, Cys-51/Cys-91, Cys-60/Cys-84, and Cys-78/Cys-89. 3 residues coordinate Ca(2+): Tyr-28, Gly-30, and Gly-32. His-48 is a catalytic residue. A Ca(2+)-binding site is contributed by Asp-49. Asp-92 is a catalytic residue.

It belongs to the phospholipase A2 family. Group I subfamily. D49 sub-subfamily. Requires Ca(2+) as cofactor. As to expression, expressed by the venom gland.

It is found in the secreted. It catalyses the reaction a 1,2-diacyl-sn-glycero-3-phosphocholine + H2O = a 1-acyl-sn-glycero-3-phosphocholine + a fatty acid + H(+). Its function is as follows. PLA2 catalyzes the calcium-dependent hydrolysis of the 2-acyl groups in 3-sn-phosphoglycerides. In Pseudechis australis (Mulga snake), this protein is Acidic phospholipase A2 PA-1G.